The following is a 513-amino-acid chain: Calcium-binding mitochondrial carrier protein SCaMC-2 (513 aa).

Over 1-233 the chain is Mitochondrial intermembrane; it reads MARPRSLVSP…EKQTGMWWRH (233 aa). EF-hand domains follow at residues 55-90, 91-124, 122-157, and 158-193; these read EHET…LGVH, RTEL…RDHE, DHEK…LGVN, and ISEQ…HPAE. The Ca(2+) site is built by D68, N70, D72, D79, D104, D106, D108, Q110, and E115. 3 Solcar repeats span residues 228–314, 322–407, and 419–507; these read GMWW…MKRI, LGIH…LKNA, and PGVF…LKLT. The helical transmembrane segment at 234-251 threads the bilayer; the sequence is LVAGGGAGAVSRTCTAPL. At 252 to 288 the chain is on the mitochondrial matrix side; sequence DRLKVLMQVHASRSNNMSMLGGFTQMIREGGIRSLWR. Residues 289-308 traverse the membrane as a helical segment; the sequence is GNGINVIKIAPESAIKFMAY. Residues 309-331 are Mitochondrial intermembrane-facing; it reads EQMKRIIGSDQETLGIHERLVAG. The helical transmembrane segment at 332–345 threads the bilayer; the sequence is SLAGVIAQSSIYPM. Topologically, residues 346-381 are mitochondrial matrix; sequence EVLKTRMALRKTGQYQGMLDCGKKILLKEGVSAFYK. A helical membrane pass occupies residues 382–401; the sequence is GYVPNMLGIIPYAGIDLAVY. The Mitochondrial intermembrane portion of the chain corresponds to 402-424; sequence ETLKNAWLQRYATSSADPGVFVL. Residues 425-442 form a helical membrane-spanning segment; the sequence is LACGTISSTCGQLASYPL. Residues 443-481 are Mitochondrial matrix-facing; the sequence is ALVRTRMQAEASVEGAPQMTMSKLFKHIVKTEGAFGLYR. Residues 482–501 form a helical membrane-spanning segment; sequence GLAPNFMKVIPAVSISYVVY. Residues 502–513 are Mitochondrial intermembrane-facing; it reads ENLKLTLGVQSR.

Belongs to the mitochondrial carrier (TC 2.A.29) family.

It localises to the mitochondrion inner membrane. Calcium-dependent mitochondrial solute carrier. In Xenopus tropicalis (Western clawed frog), this protein is Calcium-binding mitochondrial carrier protein SCaMC-2 (slc25a25).